A 661-amino-acid chain; its full sequence is DNA cross-link repair protein PSO2/SNM1 (661 aa).

Positions 1-44 (MSRKSIVQIRRSEVKRKRSSTASSTSEGKTLHKNTHTSSKRQRT) are disordered. A compositionally biased stretch (basic residues) spans 31–43 (LHKNTHTSSKRQR). Residues 144 to 174 (VIQCPICLENLSHLELYERETHCDTCIGSDP) form a UBZ4-type zinc finger. Zn(2+) is bound by residues Cys-147, Cys-150, His-165, and Cys-169.

This sequence belongs to the DNA repair metallo-beta-lactamase (DRMBL) family.

The protein localises to the nucleus. Required for DNA interstrand cross-link repair. This requires cleavage of cross-linked DNA to generate DNA double strand breaks (DSBs). This protein has 5' exonuclease activity on single-stranded and double-stranded DNA, which appears to be necessary for the processing of DNA double strand breaks prior to ligation. The polypeptide is DNA cross-link repair protein PSO2/SNM1 (PSO2) (Saccharomyces cerevisiae (strain ATCC 204508 / S288c) (Baker's yeast)).